The sequence spans 206 residues: Large ribosomal subunit protein uL4 (206 aa).

The interval M63–E97 is disordered. The span at Y64–A77 shows a compositional bias: basic residues.

Belongs to the universal ribosomal protein uL4 family. Part of the 50S ribosomal subunit.

Its function is as follows. One of the primary rRNA binding proteins, this protein initially binds near the 5'-end of the 23S rRNA. It is important during the early stages of 50S assembly. It makes multiple contacts with different domains of the 23S rRNA in the assembled 50S subunit and ribosome. Functionally, forms part of the polypeptide exit tunnel. In Rhizobium leguminosarum bv. trifolii (strain WSM2304), this protein is Large ribosomal subunit protein uL4.